The sequence spans 438 residues: tRNA modification GTPase MnmE (438 aa).

(6S)-5-formyl-5,6,7,8-tetrahydrofolate contacts are provided by Arg-19, Glu-76, and Lys-115. Residues 211 to 363 (GYKVAIIGRP…LSKELESYLN (153 aa)) form the TrmE-type G domain. Residues 221–226 (NVGKSS), 240–246 (SETAGTT), and 265–268 (DTAG) contribute to the GTP site. Mg(2+) is bound by residues Ser-225 and Thr-246. Residue Lys-438 coordinates (6S)-5-formyl-5,6,7,8-tetrahydrofolate.

The protein belongs to the TRAFAC class TrmE-Era-EngA-EngB-Septin-like GTPase superfamily. TrmE GTPase family. In terms of assembly, homodimer. Heterotetramer of two MnmE and two MnmG subunits. K(+) serves as cofactor.

It localises to the cytoplasm. Functionally, exhibits a very high intrinsic GTPase hydrolysis rate. Involved in the addition of a carboxymethylaminomethyl (cmnm) group at the wobble position (U34) of certain tRNAs, forming tRNA-cmnm(5)s(2)U34. The chain is tRNA modification GTPase MnmE from Campylobacter fetus subsp. fetus (strain 82-40).